The sequence spans 431 residues: F-box protein pof14 (431 aa).

In terms of domain architecture, F-box; atypical spans 172–186 (CPDEILQLIFSYCYD).

Component of the E3 ubiquitin ligase Skp1-Cullin-1-F-box (SCF) complex. Interacts with skp1, cul1 and erg9.

It is found in the cytoplasm. The protein resides in the nucleus. It localises to the endoplasmic reticulum. Its function is as follows. Expression is induced during oxidative stress. Plays an essential, SCF-independent, role in the stress response to hydrogen peroxide for survival, by negatively regulating ergosterol synthesis via direct binding to the squalene synthase erg9. This is F-box protein pof14 (pof14) from Schizosaccharomyces pombe (strain 972 / ATCC 24843) (Fission yeast).